Consider the following 542-residue polypeptide: Chaperonin GroEL (542 aa).

Residues 29 to 32 (TLGP), K50, 86 to 90 (DGTTT), G414, and D494 contribute to the ATP site.

This sequence belongs to the chaperonin (HSP60) family. In terms of assembly, forms a cylinder of 14 subunits composed of two heptameric rings stacked back-to-back. Interacts with the co-chaperonin GroES.

The protein localises to the cytoplasm. The catalysed reaction is ATP + H2O + a folded polypeptide = ADP + phosphate + an unfolded polypeptide.. Its function is as follows. Together with its co-chaperonin GroES, plays an essential role in assisting protein folding. The GroEL-GroES system forms a nano-cage that allows encapsulation of the non-native substrate proteins and provides a physical environment optimized to promote and accelerate protein folding. This is Chaperonin GroEL from Cytophaga hutchinsonii (strain ATCC 33406 / DSM 1761 / CIP 103989 / NBRC 15051 / NCIMB 9469 / D465).